An 850-amino-acid polypeptide reads, in one-letter code: cAMP-inducible prespore protein D7 (850 aa).

The signal sequence occupies residues 1–24 (MYSKKYTSFVIVLILSCIISTCTS). Over residues 119 to 130 (QNNNIGSSIGDS) the composition is skewed to low complexity. 2 disordered regions span residues 119-167 (QNNN…SKTT) and 787-850 (DAEL…QNQK). Residues 131–143 (TGASTSPQFQSIN) show a composition bias toward polar residues. Residues 144–154 (GLSGASQSSGS) are compositionally biased toward low complexity. The span at 787-798 (DAELAKNNKQEN) shows a compositional bias: basic and acidic residues. Polar residues predominate over residues 801-820 (ENLVQEKQQSPDQIKNQLKN). Low complexity predominate over residues 837-850 (EKNQQLLEQEQNQK).

In Dictyostelium discoideum (Social amoeba), this protein is cAMP-inducible prespore protein D7 (D7).